A 163-amino-acid chain; its full sequence is Nucleotide-binding protein Noca_0564 (163 aa).

It belongs to the YajQ family.

In terms of biological role, nucleotide-binding protein. The sequence is that of Nucleotide-binding protein Noca_0564 from Nocardioides sp. (strain ATCC BAA-499 / JS614).